Here is a 242-residue protein sequence, read N- to C-terminus: Small ribosomal subunit protein uS2 (242 aa).

It belongs to the universal ribosomal protein uS2 family.

This is Small ribosomal subunit protein uS2 from Neisseria meningitidis serogroup B (strain ATCC BAA-335 / MC58).